Reading from the N-terminus, the 380-residue chain is Ceramide synthase 2 (380 aa).

Residues 1-40 (MLQTLYDYFWWERLWLPVNLTWADLEDRDGRVYAKASDLY) are Lumenal-facing. An N-linked (GlcNAc...) asparagine glycan is attached at N19. A helical transmembrane segment spans residues 41 to 61 (ITLPLALLFLIVRYFFELYVA). The segment at 67–128 (LLNIKEKTRL…RRRRNQDRPS (62 aa)) is homeobox-like. The region spanning 131–332 (KKFREASWRF…ILRMAHKFIT (202 aa)) is the TLC domain. A run of 4 helical transmembrane segments spans residues 140–160 (FTFY…KPWF), 181–201 (WYYM…ASDV), 209–229 (QIIH…ANYI), and 264–284 (IFIV…PFWI). A Last loop motif motif is present at residues 291–300 (YPLELYPAFF). A helical transmembrane segment spans residues 304–324 (FFNSMMGVLQLLHIFWAYLIL). The Cytoplasmic portion of the chain corresponds to 325-380 (RMAHKFITGKLVEDERSDREETESSEGEEAAAGGGAKSRPLANGHPILNNNHRKND). The tract at residues 338–380 (DERSDREETESSEGEEAAAGGGAKSRPLANGHPILNNNHRKND) is disordered. The residue at position 341 (S341) is a Phosphoserine. The segment covering 344–353 (EETESSEGEE) has biased composition (acidic residues). T346 carries the post-translational modification Phosphothreonine. Phosphoserine occurs at positions 348 and 349.

Interacts with ATP6V0C, ASGR1, ASGR2 and SLC22A1/OCT1. Interacts with ELOV1, HSD17B12 and TECR. Interacts with NDUFS2. Interacts with PAQR4; the interaction regulates the stability and activity of CERS2 and is inhibited in presence of ceramides. In terms of processing, acetylated. Deacetylation by SIRT3 increases enzyme activity and promotes mitochondrial ceramide accumulation. Post-translationally, phosphorylated at the C-terminus by CK2, leading to increase the ceramide synthase activity. Expressed in kidney, liver, brain, heart, placenta and lung.

It localises to the endoplasmic reticulum membrane. It carries out the reaction a very long-chain fatty acyl-CoA + a sphingoid base = an N-(very-long-chain fatty acyl)-sphingoid base + CoA + H(+). The enzyme catalyses docosanoyl-CoA + sphinganine = N-docosanoylsphinganine + CoA + H(+). It catalyses the reaction tetracosanoyl-CoA + sphinganine = N-tetracosanoylsphinganine + CoA + H(+). The catalysed reaction is hexacosanoyl-CoA + sphinganine = N-hexacosanoylsphinganine + CoA + H(+). It carries out the reaction (15Z)-tetracosenoyl-CoA + sphinganine = N-(15Z-tetracosenoyl)-sphinganine + CoA + H(+). The enzyme catalyses 2-hydroxytetracosanoyl-CoA + sphinganine = N-(2-hydroxytetracosanoyl)-sphinganine + CoA + H(+). It catalyses the reaction 2-hydroxydocosanoyl-CoA + sphinganine = N-(2-hydroxydocosanoyl)-sphinganine + CoA + H(+). The catalysed reaction is 2-hydroxytetracosenoyl-CoA + sphinganine = N-(2-hydroxytetracosenoyl)-sphinganine + CoA + H(+). It carries out the reaction tetracosenoyl-CoA + sphinganine = an N-tetracosenoylsphinganine + CoA + H(+). The enzyme catalyses hexacosenoyl-CoA + sphinganine = N-hexacosenoylsphinganine + CoA + H(+). It catalyses the reaction tetracosanoyl-CoA + sphing-4-enine = N-tetracosanoyl-sphing-4-enine + CoA + H(+). The catalysed reaction is tetracosenoyl-CoA + sphing-4-enine = N-(tetracosenoyl)-sphing-4-enine + CoA + H(+). It carries out the reaction heptadecasphing-4-enine + tetracosanoyl-CoA = N-tetracosanoyl-heptadecasphing-4-enine + CoA + H(+). The enzyme catalyses a fatty acyl-CoA + sphing-4-enine = an N-acylsphing-4-enine + CoA + H(+). It catalyses the reaction sphing-4-enine + hexadecanoyl-CoA = N-hexadecanoylsphing-4-enine + CoA + H(+). The catalysed reaction is sphing-4-enine + octadecanoyl-CoA = N-octadecanoylsphing-4-enine + CoA + H(+). It carries out the reaction eicosanoyl-CoA + sphing-4-enine = N-eicosanoyl-sphing-4-enine + CoA + H(+). The enzyme catalyses sphinganine + hexadecanoyl-CoA = N-hexadecanoylsphinganine + CoA + H(+). It catalyses the reaction sphinganine + octadecanoyl-CoA = N-(octadecanoyl)-sphinganine + CoA + H(+). The catalysed reaction is sphinganine + (9Z)-octadecenoyl-CoA = N-(9Z-octadecenoyl)-sphinganine + CoA + H(+). It carries out the reaction eicosanoyl-CoA + sphinganine = N-eicosanoylsphinganine + CoA + H(+). It functions in the pathway lipid metabolism; sphingolipid metabolism. With respect to regulation, ceramide synthase activity is inhibited by sphingosine-1-phosphate. In terms of biological role, ceramide synthase that catalyzes the transfer of the acyl chain from acyl-CoA to a sphingoid base, with high selectivity toward very-long-chain fatty acyl-CoA (chain length C22-C27). N-acylates sphinganine and sphingosine bases to form dihydroceramides and ceramides in de novo synthesis and salvage pathways, respectively. Plays a non-redundant role in the synthesis of ceramides with very-long-chain fatty acids in kidney, liver and brain. Regulates the abundance of myelin-specific sphingolipids galactosylceramide and sulfatide that affects myelin sheath architecture and motor neuron functions. The protein is Ceramide synthase 2 of Homo sapiens (Human).